A 239-amino-acid polypeptide reads, in one-letter code: Geranylgeranylglyceryl phosphate synthase (239 aa).

Positions 18 and 45 each coordinate Mg(2+). Residues 166-172, 197-198, and 219-220 contribute to the sn-glycerol 1-phosphate site; these read YLEAGSG, GG, and GT.

This sequence belongs to the GGGP/HepGP synthase family. Group II subfamily. The cofactor is Mg(2+).

It localises to the cytoplasm. The enzyme catalyses sn-glycerol 1-phosphate + (2E,6E,10E)-geranylgeranyl diphosphate = sn-3-O-(geranylgeranyl)glycerol 1-phosphate + diphosphate. It participates in membrane lipid metabolism; glycerophospholipid metabolism. Its function is as follows. Prenyltransferase that catalyzes the transfer of the geranylgeranyl moiety of geranylgeranyl diphosphate (GGPP) to the C3 hydroxyl of sn-glycerol-1-phosphate (G1P). This reaction is the first ether-bond-formation step in the biosynthesis of archaeal membrane lipids. The polypeptide is Geranylgeranylglyceryl phosphate synthase (Pyrobaculum aerophilum (strain ATCC 51768 / DSM 7523 / JCM 9630 / CIP 104966 / NBRC 100827 / IM2)).